The sequence spans 303 residues: UDP-N-acetylenolpyruvoylglucosamine reductase (303 aa).

The FAD-binding PCMH-type domain maps to 32–212 (IGGKADLFLN…EQETKEYLAK (181 aa)). The active site involves arginine 176. The Proton donor role is filled by serine 226. Glutamate 296 is a catalytic residue.

The protein belongs to the MurB family. The cofactor is FAD.

It localises to the cytoplasm. The catalysed reaction is UDP-N-acetyl-alpha-D-muramate + NADP(+) = UDP-N-acetyl-3-O-(1-carboxyvinyl)-alpha-D-glucosamine + NADPH + H(+). It participates in cell wall biogenesis; peptidoglycan biosynthesis. Cell wall formation. This is UDP-N-acetylenolpyruvoylglucosamine reductase from Desulforamulus reducens (strain ATCC BAA-1160 / DSM 100696 / MI-1) (Desulfotomaculum reducens).